The primary structure comprises 144 residues: Succinate dehydrogenase cytochrome b560 subunit (144 aa).

The next 3 membrane-spanning stretches (helical) occupy residues 40–60 (IFHRITGGVLALTLCFFILIL), 84–104 (GFLFIAISFFLLLFIFYHLFA), and 124–144 (LTGYIMLGLAFLFTLIAWIIF). Residue histidine 101 coordinates heme.

The protein belongs to the cytochrome b560 family. In terms of assembly, forms part of complex II containing four subunits: a 70 kDa flavoprotein (FP), a 27 kDa iron-sulfur protein (IP), a cytochrome B and a membrane-anchoring protein. The cofactor is heme.

It is found in the mitochondrion inner membrane. Its pathway is carbohydrate metabolism; tricarboxylic acid cycle. Its function is as follows. Membrane-anchoring subunit of succinate dehydrogenase (SDH) that is involved in complex II of the mitochondrial electron transport chain and is responsible for transferring electrons from succinate to ubiquinone (coenzyme Q). This Reclinomonas americana protein is Succinate dehydrogenase cytochrome b560 subunit (SDH3).